We begin with the raw amino-acid sequence, 337 residues long: Mitochondrial metalloendopeptidase OMA1 (337 aa).

Over 1–68 (MFLNKYISNY…QPNPRDKRFQ (68 aa)) the chain is Mitochondrial matrix. Residues 69–89 (WIFGALIAGGGVYYFTHLEYV) traverse the membrane as a helical segment. Residues 90 to 337 (PISNRRRFND…MLQSFKEVHW (248 aa)) are Mitochondrial intermembrane-facing. H195 contributes to the Zn(2+) binding site. The active site involves E196. Residues H199 and E250 each coordinate Zn(2+). Residues C265 and C321 are joined by a disulfide bond.

The protein belongs to the peptidase M48 family. Zn(2+) is required as a cofactor.

The protein resides in the mitochondrion inner membrane. With respect to regulation, protease activity is induced in response to various mitochondrial stress. In terms of biological role, protease that is part of the quality control system in the inner membrane of mitochondria. Cleaves and thereby promotes the turnover of mistranslated or misfolded membrane protein. In Schizosaccharomyces pombe (strain 972 / ATCC 24843) (Fission yeast), this protein is Mitochondrial metalloendopeptidase OMA1.